Reading from the N-terminus, the 39-residue chain is Ribonuclease UK114 (39 aa).

This sequence belongs to the RutC family. Monomer. In terms of processing, the N-terminus may be blocked. Mainly expressed in the liver and kidney. Lower expression found in intestine, gizzard, glandular stomach, heart, brain and spleen.

It localises to the cytoplasm. Endoribonuclease responsible for the inhibition of the translation by cleaving mRNA. Inhibits cell-free protein synthesis. Cleaves phosphodiester bonds only in single-stranded RNA. This chain is Ribonuclease UK114, found in Gallus gallus (Chicken).